A 1559-amino-acid chain; its full sequence is Fatty acid synthase alpha subunit stcJ (1559 aa).

The Carrier domain occupies 68–147 (DTPLTAIFII…AALGEVSLGP (80 aa)). The residue at position 106 (Ser-106) is an O-(pantetheine 4'-phosphoryl)serine. Residues 457 to 693 (NHTYLITGAG…SLLLTPQLAT (237 aa)) are ketoreductase (KR) domain. One can recognise a Ketosynthase family 3 (KS3) domain in the interval 873 to 1327 (REVFQEIVLE…QKEAQLVGVH (455 aa)). Cys-1058 functions as the For beta-ketoacyl synthase activity in the catalytic mechanism. Basic and acidic residues predominate over residues 1105 to 1117 (VRDEQARGREPGE). The interval 1105 to 1125 (VRDEQARGREPGEMSRPTAAS) is disordered. Catalysis depends on for beta-ketoacyl synthase activity residues His-1212 and His-1253. Position 1432 (Asp-1432) interacts with Mg(2+). Residues 1432 to 1434 (DTV), 1480 to 1490 (EAVFKCLQTVS), 1504 to 1506 (RVQ), and 1532 to 1534 (LSY) contribute to the acetyl-CoA site. Ser-1533 lines the Mg(2+) pocket.

This sequence belongs to the thiolase-like superfamily. Fungal fatty acid synthetase subunit alpha family. [Alpha(6)beta(6)] hexamers of two multifunctional subunits (alpha and beta).

The catalysed reaction is acetyl-CoA + n malonyl-CoA + 2n NADPH + 4n H(+) = a long-chain-acyl-CoA + n CoA + n CO2 + 2n NADP(+).. It carries out the reaction a fatty acyl-[ACP] + malonyl-[ACP] + H(+) = a 3-oxoacyl-[ACP] + holo-[ACP] + CO2. It catalyses the reaction a (3R)-hydroxyacyl-[ACP] + NADP(+) = a 3-oxoacyl-[ACP] + NADPH + H(+). The protein operates within mycotoxin biosynthesis; sterigmatocystin biosynthesis. Fatty acid synthase alpha subunit; part of the gene cluster that mediates the biosynthesis of sterigmatocystin (ST), a polyketide-derived furanocoumarin which is part of the most toxic and carcinogenic compounds among the known mycotoxins. The first step in the biosynthesis of sterigmatocystin is the production of hexanoate by the fatty acid synthase (FAS) units stcJ and stcK. The polyketide backbone is assembled by the non-reducing polyketide synthase stcA by condensation of the starter hexanoyl-CoA and 7 malonyl-CoA extender units followed by cyclization and release of norsolorinic acid. Norsolorinic acid is the first stable intermediate in the biosynthesis of sterigmatocystin and is converted into averantin (AVN) by the ketoreductase stcE which reduces the hexanoate ketone to an alcohol. Averantin is then oxidized into 5'-hydroxyaverantin (HAVN) by the cytochrome P450 monooxygenase stcF. 5'-hydroxyaverantin is further converted to 5'-oxyaverantin (OAVN) by the 5'-hydroxyaverantin dehydrogenase stcG. The next step is the conversion of OAVN into averufin (AVF) which is catalyzed by a yet to be identified enzyme. The cytochrome P450 monooxygenase stcB and the flavin-binding monooxygenase stcW are both required for the conversion of averufin to 1-hydroxyversicolorone. The esterase stcI probably catalyzes the formation of versiconal hemiacetal acetate from 1-hydroxyversicolorone. The oxydoreductase stcN then probably catalyzes the biosynthetic step from versiconal to versicolorin B (VERB). The next step is performed by the versicolorin B desaturase stcL to produce versicolorin A (VERA). The ketoreductase stcU and the cytochrome P450 monooxygenase stcS are involved in the conversion of versicolorin A to demethylsterigmatocystin. The Baeyer-Villiger oxidas stcQ and the reductase stcR might be involved in the biosynthetic step from versicolorin A to demethylsterigmatocystin. The final step in the biosynthesis of sterigmatocystin is the methylation of demethylsterigmatocystin catalyzed by the methyltransferase stcP. The polypeptide is Fatty acid synthase alpha subunit stcJ (Emericella nidulans (strain FGSC A4 / ATCC 38163 / CBS 112.46 / NRRL 194 / M139) (Aspergillus nidulans)).